Consider the following 239-residue polypeptide: Uridylate kinase (239 aa).

13-16 is a binding site for ATP; it reads KLSG. UMP is bound at residue Gly55. The ATP site is built by Gly56 and Arg60. UMP contacts are provided by residues Asp75 and 136-143; that span reads TGNPFFTT. 4 residues coordinate ATP: Thr163, Asn164, Tyr169, and Asp172.

It belongs to the UMP kinase family. Homohexamer.

The protein localises to the cytoplasm. It carries out the reaction UMP + ATP = UDP + ADP. Its pathway is pyrimidine metabolism; CTP biosynthesis via de novo pathway; UDP from UMP (UMPK route): step 1/1. Inhibited by UTP. Functionally, catalyzes the reversible phosphorylation of UMP to UDP. The polypeptide is Uridylate kinase (Neisseria meningitidis serogroup A / serotype 4A (strain DSM 15465 / Z2491)).